Here is a 516-residue protein sequence, read N- to C-terminus: 2-isopropylmalate synthase (516 aa).

A Pyruvate carboxyltransferase domain is found at 5–268; the sequence is LIIFDTTLRD…DLGIDTTQIV (264 aa). The Mn(2+) site is built by D14, H202, H204, and N239. A regulatory domain region spans residues 395-516; sequence KFVSLSQHSE…DKLNPQRADI (122 aa).

Belongs to the alpha-IPM synthase/homocitrate synthase family. LeuA type 1 subfamily. Homodimer. Requires Mn(2+) as cofactor.

Its subcellular location is the cytoplasm. It carries out the reaction 3-methyl-2-oxobutanoate + acetyl-CoA + H2O = (2S)-2-isopropylmalate + CoA + H(+). Its pathway is amino-acid biosynthesis; L-leucine biosynthesis; L-leucine from 3-methyl-2-oxobutanoate: step 1/4. Its function is as follows. Catalyzes the condensation of the acetyl group of acetyl-CoA with 3-methyl-2-oxobutanoate (2-ketoisovalerate) to form 3-carboxy-3-hydroxy-4-methylpentanoate (2-isopropylmalate). In Paraburkholderia phymatum (strain DSM 17167 / CIP 108236 / LMG 21445 / STM815) (Burkholderia phymatum), this protein is 2-isopropylmalate synthase.